The primary structure comprises 268 residues: Tetratricopeptide repeat protein 33 (268 aa).

Positions 14-34 (VSKQTVQQFEQDSEQADEDEV) are disordered. Residues 24–34 (QDSEQADEDEV) are compositionally biased toward acidic residues. TPR repeat units follow at residues 60–93 (SKRL…TPED), 94–127 (AVLY…RPIW), and 128–161 (WEAW…HPSE). A disordered region spans residues 249–268 (EGDDNPTSSSQSVLIKARGL).

The protein is Tetratricopeptide repeat protein 33 (ttc33) of Danio rerio (Zebrafish).